The primary structure comprises 381 residues: Phospholipid scramblase family protein C343.06c (381 aa).

A disordered region spans residues 336–369 (QEILKNDQETTPSTNDSSSETKSPFLSDADLDQQ). Residues 344–359 (ETTPSTNDSSSETKSP) are compositionally biased toward polar residues.

This sequence belongs to the phospholipid scramblase family.

The protein resides in the mitochondrion. The chain is Phospholipid scramblase family protein C343.06c from Schizosaccharomyces pombe (strain 972 / ATCC 24843) (Fission yeast).